We begin with the raw amino-acid sequence, 241 residues long: Uracil-DNA glycosylase (241 aa).

The Proton acceptor role is filled by D71.

The protein belongs to the uracil-DNA glycosylase (UDG) superfamily. UNG family.

The protein localises to the cytoplasm. It carries out the reaction Hydrolyzes single-stranded DNA or mismatched double-stranded DNA and polynucleotides, releasing free uracil.. Functionally, excises uracil residues from the DNA which can arise as a result of misincorporation of dUMP residues by DNA polymerase or due to deamination of cytosine. This is Uracil-DNA glycosylase from Xanthomonas euvesicatoria pv. vesicatoria (strain 85-10) (Xanthomonas campestris pv. vesicatoria).